We begin with the raw amino-acid sequence, 623 residues long: Putative chaperone protein ClpB2, chloroplastic (623 aa).

Positions 1–123 (MNDLKFDPNV…KSEVEKLRGE (123 aa)) constitute a Clp R domain. Repeat regions lie at residues 6–71 (FDPN…NQSL) and 77–123 (RNLG…LRGE). An i region spans residues 129–375 (LKTYGTDLVE…HVKAQLDIQP (247 aa)). 172 to 179 (GEPGVGKT) lines the ATP pocket. The stretch at 368 to 462 (KAQLDIQPEE…LQEAERQHDV (95 aa)) forms a coiled coil. 571–578 (GPTGVGKT) is an ATP binding site.

This sequence belongs to the ClpA/ClpB family.

The polypeptide is Putative chaperone protein ClpB2, chloroplastic (CLPB2) (Arabidopsis thaliana (Mouse-ear cress)).